A 194-amino-acid polypeptide reads, in one-letter code: Phosphoprotein p30 (194 aa).

Belongs to the asfivirus phosphoprotein p30 family. Oligomer. Interacts with host HNRNPK. Post-translationally, phosphorylated on serine residues in the 115 N-terminal amino acids.

Its subcellular location is the host cytoplasm. It localises to the host nucleus. The protein localises to the virion. Functionally, modifies the subcellular distribution of heterogeneous nuclear ribonucleoprotein K (HNRNPK) and may contribute to modulate HNRNPK functions related to processing and export of mRNAs during ASFV infection. Necessary for virus internalization. This is Phosphoprotein p30 from Ornithodoros (relapsing fever ticks).